The chain runs to 61 residues: Photosystem II reaction center protein K (61 aa).

Positions 1–24 (MLNIFSLICICLNSALYSSSLFFA) are excised as a propeptide. Residues 40–60 (MPVIPLFFFLLAFVWQAAVSF) form a helical membrane-spanning segment.

It belongs to the PsbK family. PSII is composed of 1 copy each of membrane proteins PsbA, PsbB, PsbC, PsbD, PsbE, PsbF, PsbH, PsbI, PsbJ, PsbK, PsbL, PsbM, PsbT, PsbX, PsbY, PsbZ, Psb30/Ycf12, at least 3 peripheral proteins of the oxygen-evolving complex and a large number of cofactors. It forms dimeric complexes.

It is found in the plastid. The protein resides in the chloroplast thylakoid membrane. Functionally, one of the components of the core complex of photosystem II (PSII). PSII is a light-driven water:plastoquinone oxidoreductase that uses light energy to abstract electrons from H(2)O, generating O(2) and a proton gradient subsequently used for ATP formation. It consists of a core antenna complex that captures photons, and an electron transfer chain that converts photonic excitation into a charge separation. The protein is Photosystem II reaction center protein K of Panax ginseng (Korean ginseng).